The following is a 134-amino-acid chain: Probable glycine cleavage system H protein (134 aa).

The 82-residue stretch at 29-110 (TVLVGITDYA…PYGAWIAKIK (82 aa)) folds into the Lipoyl-binding domain. Lys-70 is subject to N6-lipoyllysine.

Belongs to the GcvH family. As to quaternary structure, the glycine cleavage system is composed of four proteins: P, T, L and H. It depends on (R)-lipoate as a cofactor.

Functionally, the glycine cleavage system catalyzes the degradation of glycine. The H protein shuttles the methylamine group of glycine from the P protein to the T protein. The polypeptide is Probable glycine cleavage system H protein (Pyrococcus horikoshii (strain ATCC 700860 / DSM 12428 / JCM 9974 / NBRC 100139 / OT-3)).